We begin with the raw amino-acid sequence, 891 residues long: MSGVNDIRSAFLNYFAANGHEIVPSSPLVPRNDPTLMFTNAGMVQFKNVFTGVEKRPYQRATTSQKCVRAGGKHNDLDNVGYTARHHTFFEMLGNFSFGDYFKDRAIELAWKLVTEEFGLPKDKLIATVYIDDDEAFGLWKKIAGLPDSRIIRIAGADNFWQMGDTGPCGPCSEIFYDHGDKIPGGPPGSPDEDGDRFVEIWNLVFMQYEKLPDGSRLNLPKPSIDTGAGLERVAAVLQGKHDNYDIDLFVALIRAAADLTGADPHGPMKASLRVIADHLRATSFLIADGVLPSNEGRGYVLRRIMRRAMRHAQLLGAKEPLMWRLVGVLVREMGEAFPELQRARPLIEETLRLEETRFRKTLERGLSILDEKSASLKKGDMFDGETAFTLYDTYGFPLDLTQDALRARGIGVDIASFTDAMEQQKAKARASWSGSGEAATETIWFPLREKLGATEFLGYETEIAEGAVAALVKDGKEADSLKAGESGAIVLNQTPFYGESGGQVGDTGILTGDGVRVRVTDTQKKAGDLFVHLGTVEQGTLTPGMALALEVDRARRGAIRANHSATHLLHEALRQVLGDHIAQRGSLVAPERLRFDFVHNKPISADELRRIEDIANDVVLENGEVTTRLMAVDDAREAGARALFGEKYGDEVRVVSMGSTGRQGAASNALGWSVELCGGTHVKRTGDIGLISVTGESAVASGVRRIEALTGHHARHHANDAIQLAKTAAGELRTTLDDMPPRITSLMEERKKLERELSEARKKLAMGGGAASASSGAAGVRDVGGIKLMARSVEGIEIKDLKNLADQGKKQLGSGVVALVATSGDGKASIVVGVTPDLVTRFSAVDLVRKASEVLGGKGGGGKPDMAQAGGPDGAKAGAALDAIAAAMGG.

His-564, His-568, Cys-678, and His-682 together coordinate Zn(2+).

This sequence belongs to the class-II aminoacyl-tRNA synthetase family. The cofactor is Zn(2+).

It localises to the cytoplasm. It catalyses the reaction tRNA(Ala) + L-alanine + ATP = L-alanyl-tRNA(Ala) + AMP + diphosphate. Its function is as follows. Catalyzes the attachment of alanine to tRNA(Ala) in a two-step reaction: alanine is first activated by ATP to form Ala-AMP and then transferred to the acceptor end of tRNA(Ala). Also edits incorrectly charged Ser-tRNA(Ala) and Gly-tRNA(Ala) via its editing domain. The protein is Alanine--tRNA ligase of Nitrobacter hamburgensis (strain DSM 10229 / NCIMB 13809 / X14).